The following is a 379-amino-acid chain: Lipoyl synthase, mitochondrial (379 aa).

[4Fe-4S] cluster contacts are provided by cysteine 106, cysteine 111, cysteine 117, cysteine 137, cysteine 141, cysteine 144, and serine 352. The Radical SAM core domain occupies glutamate 122–leucine 341.

The protein belongs to the radical SAM superfamily. Lipoyl synthase family. It depends on [4Fe-4S] cluster as a cofactor.

The protein localises to the mitochondrion. The enzyme catalyses [[Fe-S] cluster scaffold protein carrying a second [4Fe-4S](2+) cluster] + N(6)-octanoyl-L-lysyl-[protein] + 2 oxidized [2Fe-2S]-[ferredoxin] + 2 S-adenosyl-L-methionine + 4 H(+) = [[Fe-S] cluster scaffold protein] + N(6)-[(R)-dihydrolipoyl]-L-lysyl-[protein] + 4 Fe(3+) + 2 hydrogen sulfide + 2 5'-deoxyadenosine + 2 L-methionine + 2 reduced [2Fe-2S]-[ferredoxin]. It participates in protein modification; protein lipoylation via endogenous pathway; protein N(6)-(lipoyl)lysine from octanoyl-[acyl-carrier-protein]: step 2/2. In terms of biological role, catalyzes the radical-mediated insertion of two sulfur atoms into the C-6 and C-8 positions of the octanoyl moiety bound to the lipoyl domains of lipoate-dependent enzymes, thereby converting the octanoylated domains into lipoylated derivatives. The chain is Lipoyl synthase, mitochondrial from Drosophila erecta (Fruit fly).